Here is a 293-residue protein sequence, read N- to C-terminus: Pantothenate synthetase (293 aa).

30 to 37 (MGNLHEGH) serves as a coordination point for ATP. Residue His37 is the Proton donor of the active site. Gln61 lines the (R)-pantoate pocket. Residue Gln61 coordinates beta-alanine. Residue 149 to 152 (GEKD) coordinates ATP. Gln155 contacts (R)-pantoate. Residues Val178 and 186–189 (MSSR) each bind ATP.

This sequence belongs to the pantothenate synthetase family. Homodimer.

The protein localises to the cytoplasm. The enzyme catalyses (R)-pantoate + beta-alanine + ATP = (R)-pantothenate + AMP + diphosphate + H(+). It functions in the pathway cofactor biosynthesis; (R)-pantothenate biosynthesis; (R)-pantothenate from (R)-pantoate and beta-alanine: step 1/1. In terms of biological role, catalyzes the condensation of pantoate with beta-alanine in an ATP-dependent reaction via a pantoyl-adenylate intermediate. The chain is Pantothenate synthetase from Vibrio cholerae serotype O1 (strain ATCC 39541 / Classical Ogawa 395 / O395).